Reading from the N-terminus, the 225-residue chain is UPF0758 protein BP1235 (225 aa).

The 123-residue stretch at 103–225 folds into the MPN domain; the sequence is ALANPDLVRR…TVSMAAQGHL (123 aa). His174, His176, and Asp187 together coordinate Zn(2+). Residues 174–187 carry the JAMM motif motif; sequence HNHPGGTAAASAAD.

Belongs to the UPF0758 family.

This chain is UPF0758 protein BP1235, found in Bordetella pertussis (strain Tohama I / ATCC BAA-589 / NCTC 13251).